The primary structure comprises 332 residues: Ubiquinone biosynthesis protein COQ4, mitochondrial (332 aa).

The N-terminal 16 residues, 1 to 16 (MFTVSKKSLQASRNAF), are a transit peptide targeting the mitochondrion. Zn(2+)-binding residues include H212, D213, H216, and E228.

It belongs to the COQ4 family. As to quaternary structure, component of a multi-subunit COQ enzyme complex, composed of at least COQ3, COQ4, COQ5, COQ6, COQ7 and COQ9. It depends on Zn(2+) as a cofactor.

The protein resides in the mitochondrion inner membrane. The catalysed reaction is a 4-hydroxy-3-methoxy-5-(all-trans-polyprenyl)benzoate + H(+) = a 2-methoxy-6-(all-trans-polyprenyl)phenol + CO2. Its pathway is cofactor biosynthesis; ubiquinone biosynthesis. Functionally, lyase that catalyzes the C1-decarboxylation of 4-hydroxy-3-methoxy-5-(all-trans-polyprenyl)benzoic acid into 2-methoxy-6-(all-trans-polyprenyl)phenol during ubiquinone biosynthesis. The protein is Ubiquinone biosynthesis protein COQ4, mitochondrial of Kluyveromyces lactis (strain ATCC 8585 / CBS 2359 / DSM 70799 / NBRC 1267 / NRRL Y-1140 / WM37) (Yeast).